A 132-amino-acid chain; its full sequence is Large-conductance mechanosensitive channel (132 aa).

A run of 2 helical transmembrane segments spans residues 14–34 (VIDLAVGVVIGAAFGKIVSSL) and 67–87 (GNFIQTIFDFLIIAAAIFMFV).

Belongs to the MscL family. As to quaternary structure, homopentamer.

It localises to the cell membrane. Channel that opens in response to stretch forces in the membrane lipid bilayer. May participate in the regulation of osmotic pressure changes within the cell. This chain is Large-conductance mechanosensitive channel, found in Bacillus anthracis (strain A0248).